A 388-amino-acid polypeptide reads, in one-letter code: Chaperone protein DnaJ (388 aa).

The region spanning 5-70 (DYYTTLNISN…KKRNLYDQYG (66 aa)) is the J domain. Residues 135–213 (GIKKEIRIPK…CFGQGRIKKS (79 aa)) form a CR-type zinc finger. Positions 148, 151, 165, 168, 187, 190, 201, and 204 each coordinate Zn(2+). CXXCXGXG motif repeat units lie at residues 148–155 (CQSCYGYG), 165–172 (CTSCNGHG), 187–194 (CSTCRGTG), and 201–208 (CKICFGQG).

Belongs to the DnaJ family. Homodimer. Requires Zn(2+) as cofactor.

Its subcellular location is the cytoplasm. In terms of biological role, participates actively in the response to hyperosmotic and heat shock by preventing the aggregation of stress-denatured proteins and by disaggregating proteins, also in an autonomous, DnaK-independent fashion. Unfolded proteins bind initially to DnaJ; upon interaction with the DnaJ-bound protein, DnaK hydrolyzes its bound ATP, resulting in the formation of a stable complex. GrpE releases ADP from DnaK; ATP binding to DnaK triggers the release of the substrate protein, thus completing the reaction cycle. Several rounds of ATP-dependent interactions between DnaJ, DnaK and GrpE are required for fully efficient folding. Also involved, together with DnaK and GrpE, in the DNA replication of plasmids through activation of initiation proteins. In Buchnera aphidicola subsp. Cinara cedri (strain Cc), this protein is Chaperone protein DnaJ.